The chain runs to 445 residues: E3 ubiquitin-protein ligase MYLIP (445 aa).

The region spanning 1-279 (MLCYVTRPDA…ETHAFYRCDT (279 aa)) is the FERM domain. Positions 341 to 363 (RNDQSPPSSPLKSSDSSMSCSSC) are disordered. Residues 350–363 (PLKSSDSSMSCSSC) show a composition bias toward low complexity. Fe cation is bound by residues C360, C363, and C368. The RING-type zinc-finger motif lies at 387 to 422 (CMVCCEEEINSTFCPCGHTVCCESCAAQLQSCPVCR). Positions 431–433 (VYL) are critical for homodimerization.

As to quaternary structure, homodimer. Interacts with the E2 ubiquitin-conjugating enzyme, UBE2D1 (via RING-type zinc finger). Interacts with myosin regulatory light chain (MRLC) and TMEM4. Post-translationally, autoubiquitinated. As to expression, expressed in developing and adult brain, hippocampus, cerebellum, cerebral cortex, thalamus and substantia nigra. Predominantly found in neurons.

Its subcellular location is the cytoplasm. The protein localises to the cell membrane. It catalyses the reaction S-ubiquitinyl-[E2 ubiquitin-conjugating enzyme]-L-cysteine + [acceptor protein]-L-lysine = [E2 ubiquitin-conjugating enzyme]-L-cysteine + N(6)-ubiquitinyl-[acceptor protein]-L-lysine.. Its pathway is protein modification; protein ubiquitination. With respect to regulation, can bind 1 iron ion per dimer. Iron binding seems to decrease LDLR degradation activity. Its function is as follows. E3 ubiquitin-protein ligase that mediates ubiquitination and subsequent proteasomal degradation of myosin regulatory light chain (MRLC), LDLR, VLDLR and LRP8. Activity depends on E2 enzymes of the UBE2D family. Proteasomal degradation of MRLC leads to inhibit neurite outgrowth in presence of NGF by counteracting the stabilization of MRLC by saposin-like protein (CNPY2/MSAP) and reducing CNPY2-stimulated neurite outgrowth. Acts as a sterol-dependent inhibitor of cellular cholesterol uptake by mediating ubiquitination and subsequent degradation of LDLR. The protein is E3 ubiquitin-protein ligase MYLIP (Mylip) of Rattus norvegicus (Rat).